Here is a 207-residue protein sequence, read N- to C-terminus: Peptidyl-tRNA hydrolase (207 aa).

A tRNA-binding site is contributed by tyrosine 14. Residue histidine 19 is the Proton acceptor of the active site. Residues tyrosine 64, asparagine 66, and asparagine 112 each contribute to the tRNA site.

The protein belongs to the PTH family. Monomer.

The protein localises to the cytoplasm. It catalyses the reaction an N-acyl-L-alpha-aminoacyl-tRNA + H2O = an N-acyl-L-amino acid + a tRNA + H(+). Functionally, hydrolyzes ribosome-free peptidyl-tRNAs (with 1 or more amino acids incorporated), which drop off the ribosome during protein synthesis, or as a result of ribosome stalling. Catalyzes the release of premature peptidyl moieties from peptidyl-tRNA molecules trapped in stalled 50S ribosomal subunits, and thus maintains levels of free tRNAs and 50S ribosomes. The protein is Peptidyl-tRNA hydrolase of Rhodopseudomonas palustris (strain BisB5).